Reading from the N-terminus, the 439-residue chain is MLLSLLFLLSTFAFGALTQPVPAKSENNVQFLHSKNKKRFYDYSTELIRGVNIGGWLLLEPYITPSLFEAFRTDENSDAGIPVDEYHYCEALGSEVAESRLEAHWSTFYTEQDFKNIASAGLNMVRIPIGYWAFKTLDSDPYVTGKQESYLDKAIQWSKDAGLKVWVDLHGAPGSQNGFDNSGLRDHWSFLEDENLNLTKEVIKYLLEKYSREEYLDTVIGIELINEPLGPVLDMDKLKEYYQFGYDYLRNELGSDQIVVIHDAFEAYNYWDSTLTVEDGSWGVVVDHHHYQCFSSDQLARSIDEHVSVACEWGTGVLTESHWTVAGEWSAALTDCAKWINGVGYGARYDGSFTKDSESSYYIGSCENNEDVSTWSEERKSNNRKYVEAQLDAFELRGGWIFWCYKTETTVEWDLQRLMYSGLFPQPVTDRQYPNQCGF.

An N-terminal signal peptide occupies residues 1-18 (MLLSLLFLLSTFAFGALT). Catalysis depends on Glu227, which acts as the Proton donor. Intrachain disulfides connect Cys311–Cys437 and Cys336–Cys366. The Nucleophile role is filled by Glu328.

The protein belongs to the glycosyl hydrolase 5 (cellulase A) family.

The protein resides in the secreted. It catalyses the reaction Successive hydrolysis of beta-D-glucose units from the non-reducing ends of (1-&gt;3)-beta-D-glucans, releasing alpha-glucose.. Functionally, beta-glucanases participate in the metabolism of beta-glucan, the main structural component of the cell wall. It could also function biosynthetically as a transglycosylase. The protein is Glucan 1,3-beta-glucosidase (EXG1) of Lachancea kluyveri (strain ATCC 58438 / CBS 3082 / BCRC 21498 / NBRC 1685 / JCM 7257 / NCYC 543 / NRRL Y-12651) (Yeast).